The primary structure comprises 152 residues: Interleukin-1 family member 10 (152 aa).

Belongs to the IL-1 family. As to quaternary structure, interacts with cargo receptor TMED10; the interaction mediates the translocation from the cytoplasm into the ERGIC (endoplasmic reticulum-Golgi intermediate compartment) and thereby secretion. As to expression, expressed in fetal skin, spleen and tonsil. Expressed mostly in the basal epithelia of skin and in proliferating B-cells of the tonsil.

It localises to the cytoplasm. It is found in the secreted. Its function is as follows. Cytokine with immunomodulatory activity. Alone, does not induce cytokine production, but reduces IL22 and IL17A production by T-cells in response to heat-killed Candida albicans. Reduces IL36G-induced production of IL8 by peripheral blood mononuclear cells. Increases IL6 production by dendritic cells stimulated by bacterial lipopolysaccharides (LPS). Ligand for IL-36R/IL1RL2. In Homo sapiens (Human), this protein is Interleukin-1 family member 10.